A 200-amino-acid chain; its full sequence is MSKVLVLKSSIMAQHSHTNQMADFFIEKWQTNHADDSITVRDLTAQSIPALDNELVHALRPSGNEMTARQKETLALSDELIAELQDNDVIVITAPMYNFHIPTQLKSYFDMIARAGVTFRYTENGPEGLLKGKQVIILTSRGGIHKDGPSDLLVPYLRLFLSFIGLTDIEFVFTEGVALGPDAANQAQQTAREVLQAIAS.

Residues serine 10, 96–99 (MYNF), and 140–143 (SRGG) contribute to the FMN site.

It belongs to the azoreductase type 1 family. As to quaternary structure, homodimer. Requires FMN as cofactor.

It catalyses the reaction 2 a quinone + NADH + H(+) = 2 a 1,4-benzosemiquinone + NAD(+). The catalysed reaction is N,N-dimethyl-1,4-phenylenediamine + anthranilate + 2 NAD(+) = 2-(4-dimethylaminophenyl)diazenylbenzoate + 2 NADH + 2 H(+). Its function is as follows. Quinone reductase that provides resistance to thiol-specific stress caused by electrophilic quinones. Also exhibits azoreductase activity. Catalyzes the reductive cleavage of the azo bond in aromatic azo compounds to the corresponding amines. In Photorhabdus laumondii subsp. laumondii (strain DSM 15139 / CIP 105565 / TT01) (Photorhabdus luminescens subsp. laumondii), this protein is FMN-dependent NADH:quinone oxidoreductase.